Here is a 261-residue protein sequence, read N- to C-terminus: Carbonic anhydrase 1 (261 aa).

An N-acetylalanine modification is found at Ala-2. The Alpha-carbonic anhydrase domain maps to 4 to 261 (SDWGYDSPNG…LKGRTVRAFF (258 aa)). The active-site Proton donor/acceptor is the His-65. Positions 95, 97, and 120 each coordinate Zn(2+). Substrate-binding positions include Thr-200 and 200–201 (TH).

It belongs to the alpha-carbonic anhydrase family. The cofactor is Zn(2+).

Its subcellular location is the cytoplasm. The catalysed reaction is hydrogencarbonate + H(+) = CO2 + H2O. It catalyses the reaction urea = cyanamide + H2O. Inhibited by acetazolamide. In terms of biological role, catalyzes the reversible hydration of carbon dioxide. Can hydrate cyanamide to urea. The sequence is that of Carbonic anhydrase 1 (CA1) from Equus caballus (Horse).